Here is a 194-residue protein sequence, read N- to C-terminus: Casparian strip membrane protein 2 (194 aa).

The Cytoplasmic segment spans residues 1 to 32; that stretch reads MSTTIDIPESSKVVKGKGVVAAPLRPGGWKKG. The chain crosses the membrane as a helical span at residues 33–53; that stretch reads VAIMDFILRLGAIAAALGAAA. Topologically, residues 54 to 82 are extracellular; the sequence is TMGTSDQTLPFFTQFFQFEASYDSFTTFQ. The chain crosses the membrane as a helical span at residues 83–103; it reads FFVITMALVGGYLVLSLPFSV. Topologically, residues 104 to 115 are cytoplasmic; it reads VAIIRPHAVGPR. A helical transmembrane segment spans residues 116–136; the sequence is LFLIILDTVFLTLATASAASA. Residues 137–168 lie on the Extracellular side of the membrane; sequence AAVVYLAHNGDQDTNWLAICNQFGDFCAQTSS. A helical membrane pass occupies residues 169 to 189; the sequence is AVVSSFVAVVVFVLLIVMSAL. Over 190–194 the chain is Cytoplasmic; that stretch reads AMGKP.

The protein belongs to the Casparian strip membrane proteins (CASP) family. In terms of assembly, homodimer and heterodimers.

It is found in the cell membrane. Regulates membrane-cell wall junctions and localized cell wall deposition. Required for establishment of the Casparian strip membrane domain (CSD) and the subsequent formation of Casparian strips, a cell wall modification of the root endodermis that determines an apoplastic barrier between the intraorganismal apoplasm and the extraorganismal apoplasm and prevents lateral diffusion. This Vigna unguiculata (Cowpea) protein is Casparian strip membrane protein 2.